A 442-amino-acid chain; its full sequence is Exodeoxyribonuclease 7 large subunit (442 aa).

It belongs to the XseA family. Heterooligomer composed of large and small subunits.

It localises to the cytoplasm. The catalysed reaction is Exonucleolytic cleavage in either 5'- to 3'- or 3'- to 5'-direction to yield nucleoside 5'-phosphates.. Bidirectionally degrades single-stranded DNA into large acid-insoluble oligonucleotides, which are then degraded further into small acid-soluble oligonucleotides. The protein is Exodeoxyribonuclease 7 large subunit of Shewanella loihica (strain ATCC BAA-1088 / PV-4).